The chain runs to 417 residues: Actin-related protein 10 (417 aa).

This sequence belongs to the actin family. As to quaternary structure, subunit of dynactin, a multiprotein complex part of a tripartite complex with dynein and a adapter, such as BICDL1, BICD2 or HOOK3. The dynactin complex is built around ACTR1A/ACTB filament and consists of an actin-related filament composed of a shoulder domain, a pointed end and a barbed end. Its length is defined by its flexible shoulder domain. The soulder is composed of 2 DCTN1 subunits, 4 DCTN2 and 2 DCTN3. The 4 DCNT2 (via N-terminus) bind the ACTR1A filament and act as molecular rulers to determine the length. The pointed end is important for binding dynein-dynactin cargo adapters. Consists of 4 subunits: ACTR10, DCNT4, DCTN5 and DCTN6. The barbed end is composed of a CAPZA1:CAPZB heterodimers, which binds ACTR1A/ACTB filament and dynactin and stabilizes dynactin.

The protein localises to the cytoplasm. Its subcellular location is the cytoskeleton. Its function is as follows. Part of the dynactin complex that activates the molecular motor dynein for ultra-processive transport along microtubules. The protein is Actin-related protein 10 (Actr10) of Mus musculus (Mouse).